The chain runs to 313 residues: Acetyl-coenzyme A carboxylase carboxyl transferase subunit alpha (313 aa).

In terms of domain architecture, CoA carboxyltransferase C-terminal spans 42–292 (KSDKLLRDTY…GAAIGEELDK (251 aa)).

Belongs to the AccA family. Acetyl-CoA carboxylase is a heterohexamer composed of biotin carboxyl carrier protein (AccB), biotin carboxylase (AccC) and two subunits each of ACCase subunit alpha (AccA) and ACCase subunit beta (AccD).

It is found in the cytoplasm. The enzyme catalyses N(6)-carboxybiotinyl-L-lysyl-[protein] + acetyl-CoA = N(6)-biotinyl-L-lysyl-[protein] + malonyl-CoA. It functions in the pathway lipid metabolism; malonyl-CoA biosynthesis; malonyl-CoA from acetyl-CoA: step 1/1. Component of the acetyl coenzyme A carboxylase (ACC) complex. First, biotin carboxylase catalyzes the carboxylation of biotin on its carrier protein (BCCP) and then the CO(2) group is transferred by the carboxyltransferase to acetyl-CoA to form malonyl-CoA. The chain is Acetyl-coenzyme A carboxylase carboxyl transferase subunit alpha from Rhizorhabdus wittichii (strain DSM 6014 / CCUG 31198 / JCM 15750 / NBRC 105917 / EY 4224 / RW1) (Sphingomonas wittichii).